We begin with the raw amino-acid sequence, 267 residues long: Tryptophan synthase alpha chain (267 aa).

Active-site proton acceptor residues include Glu43 and Asp54.

It belongs to the TrpA family. As to quaternary structure, tetramer of two alpha and two beta chains.

The enzyme catalyses (1S,2R)-1-C-(indol-3-yl)glycerol 3-phosphate + L-serine = D-glyceraldehyde 3-phosphate + L-tryptophan + H2O. It functions in the pathway amino-acid biosynthesis; L-tryptophan biosynthesis; L-tryptophan from chorismate: step 5/5. Its function is as follows. The alpha subunit is responsible for the aldol cleavage of indoleglycerol phosphate to indole and glyceraldehyde 3-phosphate. The sequence is that of Tryptophan synthase alpha chain from Bacillus subtilis (strain 168).